Consider the following 290-residue polypeptide: Urease accessory protein UreD (290 aa).

The protein belongs to the UreD family. UreD, UreF and UreG form a complex that acts as a GTP-hydrolysis-dependent molecular chaperone, activating the urease apoprotein by helping to assemble the nickel containing metallocenter of UreC. The UreE protein probably delivers the nickel.

It is found in the cytoplasm. In terms of biological role, required for maturation of urease via the functional incorporation of the urease nickel metallocenter. The sequence is that of Urease accessory protein UreD from Paenarthrobacter aurescens (strain TC1).